We begin with the raw amino-acid sequence, 361 residues long: Peptide chain release factor 1 (361 aa).

Gln235 carries the post-translational modification N5-methylglutamine.

Belongs to the prokaryotic/mitochondrial release factor family. Post-translationally, methylated by PrmC. Methylation increases the termination efficiency of RF1.

Its subcellular location is the cytoplasm. In terms of biological role, peptide chain release factor 1 directs the termination of translation in response to the peptide chain termination codons UAG and UAA. The protein is Peptide chain release factor 1 of Xanthomonas euvesicatoria pv. vesicatoria (strain 85-10) (Xanthomonas campestris pv. vesicatoria).